A 254-amino-acid chain; its full sequence is Proline-rich protein 23A3 (254 aa).

Disordered stretches follow at residues 1-50 (MLRT…LEAP), 161-196 (ASPP…GAEQ), and 212-254 (PFPG…LVYE). Residues 35–50 (EPACPEPLAQPELEAP) are compositionally biased toward low complexity. The span at 214–241 (PGSPLQPLPPSPSRNPQEQLPPCPPCSP) shows a compositional bias: pro residues. The segment covering 243-254 (APRRARKRLVYE) has biased composition (basic residues).

Belongs to the PRR23 family.

This chain is Proline-rich protein 23A3, found in Mus musculus (Mouse).